The chain runs to 905 residues: Protein translocase subunit SecA (905 aa).

ATP contacts are provided by residues Gln-87, 105–109 (GEGKT), and Asp-512. The tract at residues 565 to 584 (RRIDNQLRGRSGRQGDPGSS) is disordered. Cys-886, Cys-888, Cys-897, and His-898 together coordinate Zn(2+).

Belongs to the SecA family. As to quaternary structure, monomer and homodimer. Part of the essential Sec protein translocation apparatus which comprises SecA, SecYEG and auxiliary proteins SecDF-YajC and YidC. It depends on Zn(2+) as a cofactor.

It is found in the cell inner membrane. It localises to the cytoplasm. The catalysed reaction is ATP + H2O + cellular proteinSide 1 = ADP + phosphate + cellular proteinSide 2.. Its function is as follows. Part of the Sec protein translocase complex. Interacts with the SecYEG preprotein conducting channel. Has a central role in coupling the hydrolysis of ATP to the transfer of proteins into and across the cell membrane, serving both as a receptor for the preprotein-SecB complex and as an ATP-driven molecular motor driving the stepwise translocation of polypeptide chains across the membrane. The protein is Protein translocase subunit SecA of Haemophilus ducreyi (strain 35000HP / ATCC 700724).